A 71-amino-acid polypeptide reads, in one-letter code: Large ribosomal subunit protein bL31 (71 aa).

Zn(2+) contacts are provided by Cys-16, Cys-18, Cys-37, and Cys-40.

This sequence belongs to the bacterial ribosomal protein bL31 family. Type A subfamily. As to quaternary structure, part of the 50S ribosomal subunit. It depends on Zn(2+) as a cofactor.

In terms of biological role, binds the 23S rRNA. The protein is Large ribosomal subunit protein bL31 of Serratia proteamaculans (strain 568).